A 181-amino-acid chain; its full sequence is Large ribosomal subunit protein uL5 (181 aa).

The protein belongs to the universal ribosomal protein uL5 family. As to quaternary structure, part of the 50S ribosomal subunit; part of the 5S rRNA/L5/L18/L25 subcomplex. Contacts the 5S rRNA and the P site tRNA. Forms a bridge to the 30S subunit in the 70S ribosome.

Its function is as follows. This is one of the proteins that bind and probably mediate the attachment of the 5S RNA into the large ribosomal subunit, where it forms part of the central protuberance. In the 70S ribosome it contacts protein S13 of the 30S subunit (bridge B1b), connecting the 2 subunits; this bridge is implicated in subunit movement. Contacts the P site tRNA; the 5S rRNA and some of its associated proteins might help stabilize positioning of ribosome-bound tRNAs. This Helicobacter pylori (strain ATCC 700392 / 26695) (Campylobacter pylori) protein is Large ribosomal subunit protein uL5.